We begin with the raw amino-acid sequence, 1210 residues long: ATPase family AAA domain-containing protein At1g05910 (1210 aa).

A compositionally biased stretch (polar residues) spans Met-1–Gly-11. Disordered stretches follow at residues Met-1–Arg-32 and Leu-63–Asp-291. Residues Asp-97–Met-109 show a composition bias toward acidic residues. Positions Ser-130–Arg-146 are enriched in basic and acidic residues. The span at Asp-167 to Gln-226 shows a compositional bias: acidic residues. Basic and acidic residues predominate over residues Glu-227 to Pro-244. A compositionally biased stretch (basic residues) spans Gly-276–Phe-286. An ATP-binding site is contributed by Gly-422–Thr-429. The interval Leu-856–Glu-883 is disordered. Residues Arg-897 to Met-1000 enclose the Bromo domain. Residues Asp-1057–Thr-1070 are compositionally biased toward basic and acidic residues. Residues Asp-1057–Lys-1151 are disordered. Positions Asp-1080–Glu-1090 are enriched in polar residues. Composition is skewed to basic and acidic residues over residues Asp-1108–Ser-1123 and Lys-1138–Lys-1151.

This sequence belongs to the AAA ATPase family.

The protein is ATPase family AAA domain-containing protein At1g05910 of Arabidopsis thaliana (Mouse-ear cress).